The chain runs to 403 residues: Phospholipase A1-II 2 (403 aa).

The active-site Acyl-ester intermediate is the S218. Catalysis depends on charge relay system residues S218, D286, and H323. Positions G381 to D403 are disordered. A compositionally biased stretch (acidic residues) spans E392–D403.

The protein belongs to the AB hydrolase superfamily. Lipase family.

The protein localises to the cytoplasm. In terms of biological role, acylhydrolase that catalyzes the hydrolysis of phospholipids at the sn-1 position. This chain is Phospholipase A1-II 2, found in Oryza sativa subsp. indica (Rice).